Consider the following 529-residue polypeptide: Bifunctional purine biosynthesis protein PurH (529 aa).

An MGS-like domain is found at 1-148 (MQQRRPVRRA…KNHKDVAIVV (148 aa)).

Belongs to the PurH family.

It catalyses the reaction (6R)-10-formyltetrahydrofolate + 5-amino-1-(5-phospho-beta-D-ribosyl)imidazole-4-carboxamide = 5-formamido-1-(5-phospho-D-ribosyl)imidazole-4-carboxamide + (6S)-5,6,7,8-tetrahydrofolate. The catalysed reaction is IMP + H2O = 5-formamido-1-(5-phospho-D-ribosyl)imidazole-4-carboxamide. It participates in purine metabolism; IMP biosynthesis via de novo pathway; 5-formamido-1-(5-phospho-D-ribosyl)imidazole-4-carboxamide from 5-amino-1-(5-phospho-D-ribosyl)imidazole-4-carboxamide (10-formyl THF route): step 1/1. The protein operates within purine metabolism; IMP biosynthesis via de novo pathway; IMP from 5-formamido-1-(5-phospho-D-ribosyl)imidazole-4-carboxamide: step 1/1. The polypeptide is Bifunctional purine biosynthesis protein PurH (Klebsiella pneumoniae (strain 342)).